The sequence spans 216 residues: Ribose-5-phosphate isomerase A (216 aa).

Substrate is bound by residues 26 to 29 (TGST), 79 to 82 (DGAD), and 92 to 95 (KGGG). Glu-101 acts as the Proton acceptor in catalysis. Substrate is bound at residue Lys-119.

Belongs to the ribose 5-phosphate isomerase family. As to quaternary structure, homodimer.

It catalyses the reaction aldehydo-D-ribose 5-phosphate = D-ribulose 5-phosphate. It functions in the pathway carbohydrate degradation; pentose phosphate pathway; D-ribose 5-phosphate from D-ribulose 5-phosphate (non-oxidative stage): step 1/1. In terms of biological role, catalyzes the reversible conversion of ribose-5-phosphate to ribulose 5-phosphate. The chain is Ribose-5-phosphate isomerase A from Legionella pneumophila (strain Corby).